The chain runs to 984 residues: Ubiquitin conjugation factor E4 ufd-2 (984 aa).

The 74-residue stretch at 909-982 (DVPEEFKDPI…QEWICQKRNS (74 aa)) folds into the U-box domain.

It belongs to the ubiquitin conjugation factor E4 family. As to quaternary structure, forms a complex composed of deubiquitinating enzyme atx-3, E4 ubiquitin-protein ligase ufd-2 and cdc-48.1; within the complex interacts with atx-3 and cdc-48.1 (via DDDLYN motif). Forms a complex composed of cdc-48.1, myosin chaperone unc-45, ubiquitin-protein ligases ufd-2 and chn-1; the complex targets myosin chaperone unc-45 for proteasomal degradation; within the complex interacts with cdc-48.1 (via DDDLYN motif), chn-1 and unc-45. Forms a complex composed of unc-45 and myosin heavy chain B unc-54; the complex targets unfolded unc-54 for proteasomal degradation; within the complex interacts with unc-45 (via TPR domain) and unc-54. Interacts with cdc-48.2 (via DDDLYN motif). In terms of tissue distribution, expressed in the germline (at protein level).

It localises to the cytoplasm. Its subcellular location is the nucleus membrane. It is found in the nucleus. The protein localises to the nucleolus. It carries out the reaction S-ubiquitinyl-[E2 ubiquitin-conjugating enzyme]-L-cysteine + [acceptor protein]-L-lysine = [E2 ubiquitin-conjugating enzyme]-L-cysteine + N(6)-ubiquitinyl-[acceptor protein]-L-lysine.. It participates in protein modification; protein ubiquitination. Functionally, acts as an E4 ubiquitin ligase mediating the assembly of polyubiquitin chains on substrates ubiquitinated by another E3 ubiquitin ligase. The elongation of preexisting ubiquitin chains preferentially targets ubiquitin 'Lys-29' and 'Lys-48' residues. Also functions as an E3 ligase in conjunction with specific E1 and E2 ligases. Probably by regulating protein ubiquitination at DNA damage repair sites, coordinates DNA double-strand-break repair and apoptosis in the germline. Required for germline apoptosis in response to DNA damage downstream of cep-1. Involved in the resolution of DNA-repair sites by promoting the release of rad-51 from DNA damage foci. In association with protein-ligase chn-1, acts as an E3/E4 ligase to poly-ubiquitinate lysine residues in the UCS domain of myosin chaperone unc-45. By targeting myosin chaperone unc-45 for proteasomal degradation, regulates myosin assembly in body wall muscles in association with cdc-48.1 and chn-1. However, in a contrasting study, acts as an E3 ligase, independently of chn-1, to poly-ubiquitinate unc-45 without promoting unc-45 proteasomal degradation. Instead, uses unc-45 as an adapter protein to recruit and poly-ubiquitinate unfolded myosin heavy chain B unc-54. This chain is Ubiquitin conjugation factor E4 ufd-2, found in Caenorhabditis elegans.